The following is a 767-amino-acid chain: Ribonucleoside-diphosphate reductase large subunit (767 aa).

Residues T176, 191-192 (SC), G222, 392-396 (NLCAE), and 578-582 (PTAGT) each bind substrate. The cysteines at positions 192 and 408 are disulfide-linked. Residue N392 is the Proton acceptor of the active site. Catalysis depends on C394, which acts as the Cysteine radical intermediate. E396 serves as the catalytic Proton acceptor.

Belongs to the ribonucleoside diphosphate reductase large chain family. As to quaternary structure, heterotetramer composed of a homodimer of the large subunit (R1) and a homodimer of the small subunit (R2). Larger multisubunit protein complex are also active, composed of (R1)n(R2)n.

It catalyses the reaction a 2'-deoxyribonucleoside 5'-diphosphate + [thioredoxin]-disulfide + H2O = a ribonucleoside 5'-diphosphate + [thioredoxin]-dithiol. Its function is as follows. Ribonucleoside-diphosphate reductase holoenzyme provides the precursors necessary for viral DNA synthesis. Allows virus growth in non-dividing cells, as well as reactivation from latency in infected hosts. Catalyzes the biosynthesis of deoxyribonucleotides from the corresponding ribonucleotides. This Saimiri sciureus (Common squirrel monkey) protein is Ribonucleoside-diphosphate reductase large subunit.